A 216-amino-acid chain; its full sequence is Small ribosomal subunit protein uS3c (216 aa).

One can recognise a KH type-2 domain in the interval 43–118 (IKNYLQKNMR…KLNIAITRIT (76 aa)).

This sequence belongs to the universal ribosomal protein uS3 family. As to quaternary structure, part of the 30S ribosomal subunit.

Its subcellular location is the plastid. It is found in the chloroplast. The protein is Small ribosomal subunit protein uS3c (rps3) of Eucalyptus globulus subsp. globulus (Tasmanian blue gum).